The chain runs to 253 residues: MQLSSSEPCVVILTEKEVEVSVNNHATFTLPKNYLAAFACNNNVIELSTLNHVLITHINRNIINDYLLFLNKNLTCVKPWSRLATPVIACHSRTPEVFRLAANHSKQQPSRPCEAELTRALLFTVLSNFLEQSRFIALLMYILRSSVRDSVCRIIQSDIQHYWNLRIVASSLCLSPSLLKKKLKNENTSYSQIVTECRMRYAVQMLLMDNKNITQVAQLCGYSSTSYFISVFKAFYGLTPLNYLAKQRQKVMW.

The HTH araC/xylS-type domain maps to 149 to 246 (DSVCRIIQSD…GLTPLNYLAK (98 aa)). DNA-binding regions (H-T-H motif) lie at residues 166 to 187 (RIVASSLCLSPSLLKKKLKNEN) and 213 to 236 (ITQVAQLCGYSSTSYFISVFKAFY).

In terms of biological role, influences the temperature-dependent expression of several E.coli envelope proteins, most notably the porins OmpF and OmpC and the lambda receptor, LamB. The chain is Porin thermoregulatory protein EnvY (envY) from Escherichia coli (strain K12).